Reading from the N-terminus, the 63-residue chain is Lysis protein (63 aa).

The helical transmembrane segment at 21 to 43 (LYVWIALAIVLSDFTSIFSHWIW) threads the bilayer.

The protein belongs to the Leviviricetes lysis protein family.

The protein localises to the host cell inner membrane. It localises to the host cell outer membrane. Induces the formation of specific membrane adhesion sites between the inner and outer membranes, apparently leading to host cell lysis. Lysis may be performed via activation of host murein hydrolases. This is Lysis protein from Escherichia coli (Bacteriophage JP34).